Consider the following 285-residue polypeptide: Nucleotide-binding protein PSPTO_4456 (285 aa).

8–15 (GRSGSGKS) contributes to the ATP binding site. 60 to 63 (DARN) provides a ligand contact to GTP.

The protein belongs to the RapZ-like family.

Functionally, displays ATPase and GTPase activities. This chain is Nucleotide-binding protein PSPTO_4456, found in Pseudomonas syringae pv. tomato (strain ATCC BAA-871 / DC3000).